The chain runs to 184 residues: Ribosome-recycling factor (184 aa).

The span at 133–162 (RDGMDNLKQDENKKEISEDERKRHETEVQK) shows a compositional bias: basic and acidic residues. The disordered stretch occupies residues 133-163 (RDGMDNLKQDENKKEISEDERKRHETEVQKL).

It belongs to the RRF family.

It is found in the cytoplasm. Responsible for the release of ribosomes from messenger RNA at the termination of protein biosynthesis. May increase the efficiency of translation by recycling ribosomes from one round of translation to another. The sequence is that of Ribosome-recycling factor from Sphingopyxis alaskensis (strain DSM 13593 / LMG 18877 / RB2256) (Sphingomonas alaskensis).